Consider the following 414-residue polypeptide: Arrestin domain-containing protein 3 (414 aa).

2 short sequence motifs (PPxY motif) span residues 346-349 (PPSY) and 391-394 (PPLY). The tract at residues 393–414 (LYSEIDPNPDQSADDRPSCPSR) is disordered. Residues 405 to 414 (ADDRPSCPSR) show a composition bias toward basic and acidic residues.

It belongs to the arrestin family. Interacts (via PPxY motifs) with NEDD4 (via WW domains). Interacts with ADRB2. Interacts with ADRB3. Interacts with HGS (via PPxY motifs). Does not bind TXN (thioredoxin). Interacts with ITCH.

The protein localises to the cytoplasm. The protein resides in the cell membrane. Its subcellular location is the lysosome. It is found in the endosome. It localises to the early endosome. Adapter protein that plays a role in regulating cell-surface expression of adrenergic receptors and probably also other G protein-coupled receptors. Plays a role in NEDD4-mediated ubiquitination and endocytosis af activated ADRB2 and subsequent ADRB2 degradation. May recruit NEDD4 to ADRB2. Alternatively, may function as adapter protein that does not play a major role in recruiting NEDD4 to ADRB2, but rather plays a role in a targeting ADRB2 to endosomes. This is Arrestin domain-containing protein 3 (ARRDC3) from Pongo abelii (Sumatran orangutan).